Reading from the N-terminus, the 333-residue chain is Anthranilate phosphoribosyltransferase (333 aa).

5-phospho-alpha-D-ribose 1-diphosphate-binding positions include G81, 84–85, T89, 91–94, 109–117, and A121; these read GD, NIST, and KHGNRSVSS. G81 provides a ligand contact to anthranilate. Mg(2+) is bound at residue S93. Position 112 (N112) interacts with anthranilate. An anthranilate-binding site is contributed by R167. Mg(2+) is bound by residues D225 and E226.

This sequence belongs to the anthranilate phosphoribosyltransferase family. As to quaternary structure, homodimer. It depends on Mg(2+) as a cofactor.

It catalyses the reaction N-(5-phospho-beta-D-ribosyl)anthranilate + diphosphate = 5-phospho-alpha-D-ribose 1-diphosphate + anthranilate. The protein operates within amino-acid biosynthesis; L-tryptophan biosynthesis; L-tryptophan from chorismate: step 2/5. Its function is as follows. Catalyzes the transfer of the phosphoribosyl group of 5-phosphorylribose-1-pyrophosphate (PRPP) to anthranilate to yield N-(5'-phosphoribosyl)-anthranilate (PRA). The chain is Anthranilate phosphoribosyltransferase from Haemophilus influenzae (strain PittEE).